We begin with the raw amino-acid sequence, 695 residues long: NADPH--cytochrome P450 reductase (695 aa).

Residues 1 to 8 (MAQLDTLD) lie on the Lumenal side of the membrane. Residues 9-31 (LVVLAVLLVGSVAYFTKGTYWAV) traverse the membrane as a helical segment. At 32–695 (AKDPYASTGP…SGSYQEDVWS (664 aa)) the chain is on the cytoplasmic side. The 156-residue stretch at 66–221 (CVIFYGSQTG…DFLAWKEPMW (156 aa)) folds into the Flavodoxin-like domain. FMN is bound by residues 72 to 77 (SQTGTA), 123 to 126 (ATYG), 169 to 178 (LGNNTYEHYN), and Asp204. Positions 277–538 (HNPFIAPIAE…HVRHSNFKLP (262 aa)) constitute an FAD-binding FR-type domain. Residue Arg296 coordinates NADP(+). Residues 451–454 (RYYS), 469–471 (TAV), and 486–489 (GVTT) contribute to the FAD site. Residues Thr552, 614-615 (SR), 620-624 (KVYVQ), and Glu656 contribute to the NADP(+) site. Trp694 serves as a coordination point for FAD.

Belongs to the NADPH--cytochrome P450 reductase family. It in the N-terminal section; belongs to the flavodoxin family. This sequence in the C-terminal section; belongs to the flavoprotein pyridine nucleotide cytochrome reductase family. FAD serves as cofactor. FMN is required as a cofactor.

It localises to the endoplasmic reticulum membrane. The protein localises to the mitochondrion outer membrane. The protein resides in the cell membrane. The catalysed reaction is 2 oxidized [cytochrome P450] + NADPH = 2 reduced [cytochrome P450] + NADP(+) + H(+). Functionally, this enzyme is required for electron transfer from NADP to cytochrome P450 in microsomes. It can also provide electron transfer to heme oxygenase and cytochrome B5. Involved in ergosterol biosynthesis. This is NADPH--cytochrome P450 reductase from Aspergillus niger (strain ATCC MYA-4892 / CBS 513.88 / FGSC A1513).